A 128-amino-acid polypeptide reads, in one-letter code: Nitrogen fixation nifHD region GlnB-like protein 2 (128 aa).

The protein belongs to the P(II) protein family.

Could be involved in the regulation of nitrogen fixation. The sequence is that of Nitrogen fixation nifHD region GlnB-like protein 2 (glnBB) from Methanothermococcus thermolithotrophicus (Methanococcus thermolithotrophicus).